Here is a 291-residue protein sequence, read N- to C-terminus: Bifunctional protein FolD (291 aa).

NADP(+) contacts are provided by residues 167-169 (GRS) and S192.

Belongs to the tetrahydrofolate dehydrogenase/cyclohydrolase family. Homodimer.

The catalysed reaction is (6R)-5,10-methylene-5,6,7,8-tetrahydrofolate + NADP(+) = (6R)-5,10-methenyltetrahydrofolate + NADPH. It catalyses the reaction (6R)-5,10-methenyltetrahydrofolate + H2O = (6R)-10-formyltetrahydrofolate + H(+). The protein operates within one-carbon metabolism; tetrahydrofolate interconversion. Catalyzes the oxidation of 5,10-methylenetetrahydrofolate to 5,10-methenyltetrahydrofolate and then the hydrolysis of 5,10-methenyltetrahydrofolate to 10-formyltetrahydrofolate. The chain is Bifunctional protein FolD from Leptospira biflexa serovar Patoc (strain Patoc 1 / Ames).